Consider the following 843-residue polypeptide: Protein P (843 aa).

Residues 1–177 (MPLSYQHFRK…FCGSPYSWEQ (177 aa)) are terminal protein domain (TP). The spacer stretch occupies residues 178–346 (ELQHGRLVFQ…YCLSHLINLH (169 aa)). Disordered stretches follow at residues 218–243 (LKQS…SGSI) and 291–315 (TAQR…AGSQ). Residues 347–690 (EDWGPCIEHG…YLNLYPVARQ (344 aa)) form a polymerase/reverse transcriptase domain (RT) region. In terms of domain architecture, Reverse transcriptase spans 357–600 (EHNIRIPRTP…YSLNFMGYVI (244 aa)). Mg(2+) is bound by residues D429, D551, and D552.

This sequence belongs to the hepadnaviridae P protein family.

The enzyme catalyses DNA(n) + a 2'-deoxyribonucleoside 5'-triphosphate = DNA(n+1) + diphosphate. The catalysed reaction is Endonucleolytic cleavage to 5'-phosphomonoester.. With respect to regulation, activated by host HSP70 and HSP40 in vitro to be able to bind the epsilon loop of the pgRNA. Because deletion of the RNase H region renders the protein partly chaperone-independent, the chaperones may be needed indirectly to relieve occlusion of the RNA-binding site by this domain. Inhibited by several reverse-transcriptase inhibitors: Lamivudine, Adefovir and Entecavir. Its function is as follows. Multifunctional enzyme that converts the viral RNA genome into dsDNA in viral cytoplasmic capsids. This enzyme displays a DNA polymerase activity that can copy either DNA or RNA templates, and a ribonuclease H (RNase H) activity that cleaves the RNA strand of RNA-DNA heteroduplexes in a partially processive 3'- to 5'-endonucleasic mode. Neo-synthesized pregenomic RNA (pgRNA) are encapsidated together with the P protein, and reverse-transcribed inside the nucleocapsid. Initiation of reverse-transcription occurs first by binding the epsilon loop on the pgRNA genome, and is initiated by protein priming, thereby the 5'-end of (-)DNA is covalently linked to P protein. Partial (+)DNA is synthesized from the (-)DNA template and generates the relaxed circular DNA (RC-DNA) genome. After budding and infection, the RC-DNA migrates in the nucleus, and is converted into a plasmid-like covalently closed circular DNA (cccDNA). The activity of P protein does not seem to be necessary for cccDNA generation, and is presumably released from (+)DNA by host nuclear DNA repair machinery. In Hepatitis B virus genotype C subtype ayw (isolate Australia/AustRC/1992) (HBV-C), this protein is Protein P.